We begin with the raw amino-acid sequence, 184 residues long: dITP/XTP pyrophosphatase (184 aa).

5–10 (SSNRHK) contributes to the substrate binding site. Residues glutamate 33 and aspartate 62 each coordinate Mg(2+). Catalysis depends on aspartate 62, which acts as the Proton acceptor. Substrate contacts are provided by residues serine 63, 136–139 (WGFD), lysine 158, and 163–164 (HR).

This sequence belongs to the HAM1 NTPase family. As to quaternary structure, homodimer. Mg(2+) serves as cofactor.

It carries out the reaction XTP + H2O = XMP + diphosphate + H(+). The catalysed reaction is dITP + H2O = dIMP + diphosphate + H(+). The enzyme catalyses ITP + H2O = IMP + diphosphate + H(+). Pyrophosphatase that catalyzes the hydrolysis of nucleoside triphosphates to their monophosphate derivatives, with a high preference for the non-canonical purine nucleotides XTP (xanthosine triphosphate), dITP (deoxyinosine triphosphate) and ITP. Seems to function as a house-cleaning enzyme that removes non-canonical purine nucleotides from the nucleotide pool, thus preventing their incorporation into DNA/RNA and avoiding chromosomal lesions. The protein is dITP/XTP pyrophosphatase of Korarchaeum cryptofilum (strain OPF8).